The sequence spans 397 residues: MAKQKFERTKPHVNIGTIGHIDHGKTTLTAAITKVLHDAYPDLNPFTPFDQIDKAPEEKARGITISIAHVEYQTDTRHYAHVDCPGHADYIKNMITGAAQMDGAILVVSATDGPMPQTKEHVLLARQVGVPYIVVALNKADMVDDEEILELVELEVRELLSSYEFPGDDVPVVRVSALKALEGDKEWGAKLLELMAAVDESIPEPQRDIDRPFLMPIEDVFTITGRGTVVTGRVERGIVKVNETVEIVGIKPETTSTTVTGVEMFRKLLDEGRAGDNVGLLLRGIKREDVERGQVIVKPKSITPHTVFEARVYILNKDEGGRHTPFFKNYRPQFYFRTTDVTGVVTLPEGTEMVMPGDNTEMTVELIQPIAMEEGLRFAIREGGRTVGAGQVTKVLK.

In terms of domain architecture, tr-type G spans 10-206 (KPHVNIGTIG…AVDESIPEPQ (197 aa)). The interval 19-26 (GHIDHGKT) is G1. GTP is bound at residue 19–26 (GHIDHGKT). Thr26 is a binding site for Mg(2+). Residues 62 to 66 (GITIS) form a G2 region. The interval 83 to 86 (DCPG) is G3. Residues 83–87 (DCPGH) and 138–141 (NKAD) contribute to the GTP site. Positions 138-141 (NKAD) are G4. The interval 176–178 (SAL) is G5.

The protein belongs to the TRAFAC class translation factor GTPase superfamily. Classic translation factor GTPase family. EF-Tu/EF-1A subfamily. Monomer.

The protein localises to the cytoplasm. It carries out the reaction GTP + H2O = GDP + phosphate + H(+). Its function is as follows. GTP hydrolase that promotes the GTP-dependent binding of aminoacyl-tRNA to the A-site of ribosomes during protein biosynthesis. The protein is Elongation factor Tu of Frankia casuarinae (strain DSM 45818 / CECT 9043 / HFP020203 / CcI3).